The sequence spans 444 residues: Prenyltransferase phnF (444 aa).

This sequence belongs to the tryptophan dimethylallyltransferase family.

The catalysed reaction is 2,3,4,7,9-pentahydroxy-6-methyl-1H-phenalen-1-one + dimethylallyl diphosphate = 2,4,7,9-tetrahydroxy-6-methyl-8-(2-methylbut-3-en-2-yl)-1-oxo-1H-phenalen-3-ol + diphosphate. It participates in secondary metabolite biosynthesis. Functionally, prenyltransferase; part of the gene cluster that mediates the biosynthesis of phenalenones such as herqueinone, compounds that have been reported to treat tumors, bacterial infections and/or mycoses, and rheumatic diseases. The non-reducing polyketide synthase phnA synthesizes the heptaketide backbone and cyclizes it into the angular, hemiketal-containing naphtho-gamma-pyrone prephenalenone. The product template (PT) domain of phnA catalyzes only the C4-C9 aldol condensation, which is unprecedented among known PT domains. The transformation of prephenalenone to phenalenones requires an FAD-dependent monooxygenase phnB, which catalyzes the C2 aromatic hydroxylation of prephenalenone and ring opening of the gamma-pyrone ring simultaneously. Subsequent intramolecular deprotonation of C3 phenolic oxygen accelerates phenalenone ring closure to yield the tricyclic phenalenone core with a C2 hydroxylation. The prenyltransferase phnF further catalyzes reverse C-prenylation of phenalenone by direct electrophilic substitution at C6, or possibly via first a forward O-prenylation of a neighboring phenol in phenalenone, followed by a Claisen rearrangement. The hydroalkoxylation enzyme phnH catalyzes the 5-exo-trig cyclization via acid catalysis after the spontaneous deprotonation of 7-OH, which leads to the formation of the dihydrobenzofuran atrovenetin. Atrovenetin is further converted to deoxyherqueinone by the O-methyltransferase phnC which can methylate C2-OH to stabilize the northern portion of the phenalenone core. Finally, the oxidoreductase phnG converts deoxyherqueinone to herqueinone via C6 hydroxylation. This Penicillium herquei protein is Prenyltransferase phnF.